The following is a 947-amino-acid chain: MLDKLLRLGEGRMVKRLKKVADYVNTLSDDVEKLSDAELRAKTDEFRKRIDGGEDLDDLLPEAFAVAREAAWRVLSQRHFDVQVMGGAALHFGNVAEMKTGEGKTLTCVLPAYLNALSGKGVHVVTVNDYLAKRDAEWMGRVHRFLGLDVGVILSGLTPDERRAAYHADITYGTNNEFGFDYLRDNMAHRLEDRVQRGHNFAVVDEVDSILIDEARTPLIISGPADAASNWYSEFARLAPLMEKDVHYEVDLRKRTVGVHEVGVEFVEDQLGIENLYEAANSPLVSYLNNALKAKELFQRDKDYIVRNGEVLIVDEFTGRVLLGRRYNEGMHQAIEAKEHVEIKAENQTLATITLQNYFRLYDKLAGMTGTAQTEAAELHEIYKLGVVPIPTNRDMIRQDQTDLIYKTEEAKFIAVVDDVYERYEKGQPVLIGTTSVERSEYLSKQFTKRKIPHNVLNAKYHEQEANIIAEAGRLGAITVATNMAGRGTDIVLGGNVDFLADKRLREQGLDPVETPEEYEAAWESTLNQIKAEAEEEADDVRAVGGLYVLGTERHESRRIDNQLRGRSGRQGDPGESRFYLSLGDELMRRFNGATLEALLTRLNLPDDVPIEAKMVTRAIKSAQTQVEQQNFEVRKNVLKYDEVMNQQRKVIYEERRRILEGEDLAEQAHKMLVDVVTAYVNGATAEGYAEDWDLEQLWTALKQLYPVGIDYHDLVDSDAVGEAGELTREELLDMLIKDAERAYAERERELEELAGEGAMRQLERNVLLNVIDRKWREHLYEMDYLKEGIGLRAMAQRDPLVEYQREGYDMFVGMLEALKEESVGFLFNVTVEAAPAAPSNRVAPVAAPPGLSEFAAAAAKAQEQTGQGAVATKERETPAPTLRAKGIDNDDTPPLTYVGPGEDGSAEVQRSNGGPRHAAPGGATRRERREAARKQAKTSKPTRRRG.

Residues Gln83, 101–105 (GEGKT), and Asp490 contribute to the ATP site. The tract at residues 860–947 (AKAQEQTGQG…KTSKPTRRRG (88 aa)) is disordered. The segment covering 925 to 934 (TRRERREAAR) has biased composition (basic and acidic residues). Residues 935 to 947 (KQAKTSKPTRRRG) show a composition bias toward basic residues.

The protein belongs to the SecA family. Monomer and homodimer. Part of the essential Sec protein translocation apparatus which comprises SecA, SecYEG and auxiliary proteins SecDF. Other proteins may also be involved.

It is found in the cell membrane. The protein resides in the cytoplasm. It catalyses the reaction ATP + H2O + cellular proteinSide 1 = ADP + phosphate + cellular proteinSide 2.. Functionally, part of the Sec protein translocase complex. Interacts with the SecYEG preprotein conducting channel. Has a central role in coupling the hydrolysis of ATP to the transfer of proteins into and across the cell membrane, serving as an ATP-driven molecular motor driving the stepwise translocation of polypeptide chains across the membrane. This is Protein translocase subunit SecA 1 from Mycobacterium sp. (strain KMS).